The primary structure comprises 156 residues: SsrA-binding protein (156 aa).

It belongs to the SmpB family.

The protein resides in the cytoplasm. Functionally, required for rescue of stalled ribosomes mediated by trans-translation. Binds to transfer-messenger RNA (tmRNA), required for stable association of tmRNA with ribosomes. tmRNA and SmpB together mimic tRNA shape, replacing the anticodon stem-loop with SmpB. tmRNA is encoded by the ssrA gene; the 2 termini fold to resemble tRNA(Ala) and it encodes a 'tag peptide', a short internal open reading frame. During trans-translation Ala-aminoacylated tmRNA acts like a tRNA, entering the A-site of stalled ribosomes, displacing the stalled mRNA. The ribosome then switches to translate the ORF on the tmRNA; the nascent peptide is terminated with the 'tag peptide' encoded by the tmRNA and targeted for degradation. The ribosome is freed to recommence translation, which seems to be the essential function of trans-translation. This Maricaulis maris (strain MCS10) (Caulobacter maris) protein is SsrA-binding protein.